The sequence spans 485 residues: Rhamnulokinase (485 aa).

A11 to R15 lines the ATP pocket. Substrate contacts are provided by residues A79 and H234–T236. D235 serves as the catalytic Proton acceptor. Residue T257 coordinates ATP. Residue N294 coordinates substrate. 2 residues coordinate ATP: Q302 and G401.

Belongs to the rhamnulokinase family. The cofactor is Mg(2+).

The enzyme catalyses L-rhamnulose + ATP = L-rhamnulose 1-phosphate + ADP + H(+). The protein operates within carbohydrate degradation; L-rhamnose degradation; glycerone phosphate from L-rhamnose: step 2/3. Involved in the catabolism of L-rhamnose (6-deoxy-L-mannose). Catalyzes the transfer of the gamma-phosphate group from ATP to the 1-hydroxyl group of L-rhamnulose to yield L-rhamnulose 1-phosphate. The protein is Rhamnulokinase of Ligilactobacillus salivarius (strain UCC118) (Lactobacillus salivarius).